A 681-amino-acid chain; its full sequence is DNA ligase (681 aa).

NAD(+)-binding positions include 32-36 (DIEYD), 81-82 (SL), and glutamate 113. Lysine 115 (N6-AMP-lysine intermediate) is an active-site residue. NAD(+) contacts are provided by arginine 136, glutamate 173, lysine 290, and lysine 314. 4 residues coordinate Zn(2+): cysteine 408, cysteine 411, cysteine 426, and cysteine 432. Positions 596 to 681 (EIDSPFAGKT…LNNHGDVSTL (86 aa)) constitute a BRCT domain.

Belongs to the NAD-dependent DNA ligase family. LigA subfamily. It depends on Mg(2+) as a cofactor. The cofactor is Mn(2+).

It carries out the reaction NAD(+) + (deoxyribonucleotide)n-3'-hydroxyl + 5'-phospho-(deoxyribonucleotide)m = (deoxyribonucleotide)n+m + AMP + beta-nicotinamide D-nucleotide.. Its function is as follows. DNA ligase that catalyzes the formation of phosphodiester linkages between 5'-phosphoryl and 3'-hydroxyl groups in double-stranded DNA using NAD as a coenzyme and as the energy source for the reaction. It is essential for DNA replication and repair of damaged DNA. The protein is DNA ligase of Pectobacterium atrosepticum (strain SCRI 1043 / ATCC BAA-672) (Erwinia carotovora subsp. atroseptica).